Here is a 686-residue protein sequence, read N- to C-terminus: Methionine--tRNA ligase (686 aa).

The 'HIGH' region motif lies at 15 to 25; that stretch reads PYANGPIHLGH. Cysteine 146, cysteine 149, cysteine 159, and cysteine 162 together coordinate Zn(2+). The 'KMSKS' region motif lies at 331 to 335; the sequence is KMSKS. Residue lysine 334 participates in ATP binding. The tRNA-binding domain maps to 584–686; the sequence is DFAKIDLRVA…AGVKAGSRVM (103 aa).

Belongs to the class-I aminoacyl-tRNA synthetase family. MetG type 1 subfamily. As to quaternary structure, homodimer. Zn(2+) serves as cofactor.

The protein localises to the cytoplasm. It catalyses the reaction tRNA(Met) + L-methionine + ATP = L-methionyl-tRNA(Met) + AMP + diphosphate. Its function is as follows. Is required not only for elongation of protein synthesis but also for the initiation of all mRNA translation through initiator tRNA(fMet) aminoacylation. This chain is Methionine--tRNA ligase, found in Mannheimia succiniciproducens (strain KCTC 0769BP / MBEL55E).